Here is a 251-residue protein sequence, read N- to C-terminus: Methionine aminopeptidase (251 aa).

His76 lines the substrate pocket. A divalent metal cation is bound by residues Asp93, Asp104, and His168. Substrate is bound at residue His175. Glu202 and Glu233 together coordinate a divalent metal cation.

This sequence belongs to the peptidase M24A family. Methionine aminopeptidase type 1 subfamily. Monomer. The cofactor is Co(2+). Requires Zn(2+) as cofactor. Mn(2+) serves as cofactor. It depends on Fe(2+) as a cofactor.

It catalyses the reaction Release of N-terminal amino acids, preferentially methionine, from peptides and arylamides.. Functionally, removes the N-terminal methionine from nascent proteins. The N-terminal methionine is often cleaved when the second residue in the primary sequence is small and uncharged (Met-Ala-, Cys, Gly, Pro, Ser, Thr, or Val). Requires deformylation of the N(alpha)-formylated initiator methionine before it can be hydrolyzed. This chain is Methionine aminopeptidase, found in Staphylococcus epidermidis (strain ATCC 12228 / FDA PCI 1200).